A 137-amino-acid chain; its full sequence is Probable histone H2AXa (137 aa).

A compositionally biased stretch (gly residues) spans 1–10 (MSSSQGGGGR). A disordered region spans residues 1–21 (MSSSQGGGGRGKAKTTKAVSR). At S134 the chain carries Phosphoserine; by ATM and ATR. The [ST]-Q motif signature appears at 134-135 (SQ).

Belongs to the histone H2A family. In terms of assembly, the nucleosome is a histone octamer containing two molecules each of H2A, H2B, H3 and H4 assembled in one H3-H4 heterotetramer and two H2A-H2B heterodimers. The octamer wraps approximately 147 bp of DNA. Interacts with numerous proteins required for DNA damage signaling and repair when phosphorylated on Ser-134. In terms of processing, phosphorylated to form H2AXS139ph (gamma-H2AX) in response to DNA double strand breaks (DSBs) generated by exogenous genotoxic agents and by stalled replication forks, and may also occur during meiotic recombination events. Phosphorylation can extend up to several thousand nucleosomes from the actual site of the DSB and may mark the surrounding chromatin for recruitment of proteins required for DNA damage signaling and repair. Widespread phosphorylation may also serve to amplify the damage signal or aid repair of persistent lesions. H2AXS139ph in response to ionizing radiation is mediated by ATM while defects in DNA replication induce H2AXS139ph subsequent to activation of ATR. Dephosphorylation of H2AXS139ph by PP2A is required for DNA DSB repair.

The protein resides in the nucleus. Its subcellular location is the chromosome. In terms of biological role, variant histone H2A which replaces conventional H2A in a subset of nucleosomes. Nucleosomes wrap and compact DNA into chromatin, limiting DNA accessibility to the cellular machineries which require DNA as a template. Histones thereby play a central role in transcription regulation, DNA repair, DNA replication and chromosomal stability. DNA accessibility is regulated via a complex set of post-translational modifications of histones, also called histone code, and nucleosome remodeling. Required for checkpoint-mediated arrest of cell cycle progression in response to low doses of ionizing radiation and for efficient repair of DNA double strand breaks (DSBs) specifically when modified by C-terminal phosphorylation. The polypeptide is Probable histone H2AXa (Oryza sativa subsp. indica (Rice)).